Here is a 110-residue protein sequence, read N- to C-terminus: Cuticle protein 13 (110 aa).

This Limulus polyphemus (Atlantic horseshoe crab) protein is Cuticle protein 13.